Reading from the N-terminus, the 433-residue chain is Gamma-glutamyl phosphate reductase (433 aa).

Belongs to the gamma-glutamyl phosphate reductase family.

It is found in the cytoplasm. The catalysed reaction is L-glutamate 5-semialdehyde + phosphate + NADP(+) = L-glutamyl 5-phosphate + NADPH + H(+). It participates in amino-acid biosynthesis; L-proline biosynthesis; L-glutamate 5-semialdehyde from L-glutamate: step 2/2. Its function is as follows. Catalyzes the NADPH-dependent reduction of L-glutamate 5-phosphate into L-glutamate 5-semialdehyde and phosphate. The product spontaneously undergoes cyclization to form 1-pyrroline-5-carboxylate. This Cyanothece sp. (strain PCC 7425 / ATCC 29141) protein is Gamma-glutamyl phosphate reductase.